Here is a 159-residue protein sequence, read N- to C-terminus: Large ribosomal subunit protein uL15 (159 aa).

The segment covering 1-13 (MRLNELRDNDGAT) has biased composition (basic and acidic residues). The interval 1-41 (MRLNELRDNDGATKIRTRVGRGIGSGKGKTGGRGVKGQKSR) is disordered. Gly residues predominate over residues 21–35 (RGIGSGKGKTGGRGV).

Belongs to the universal ribosomal protein uL15 family. Part of the 50S ribosomal subunit.

Its function is as follows. Binds to the 23S rRNA. The protein is Large ribosomal subunit protein uL15 of Maricaulis maris (strain MCS10) (Caulobacter maris).